Consider the following 134-residue polypeptide: Large ribosomal subunit protein uL16c (134 aa).

Positions methionine 1–methionine 17 are enriched in basic residues. The disordered stretch occupies residues methionine 1–serine 21.

The protein belongs to the universal ribosomal protein uL16 family. As to quaternary structure, part of the 50S ribosomal subunit.

The protein localises to the plastid. Its subcellular location is the chloroplast. This chain is Large ribosomal subunit protein uL16c, found in Solanum bulbocastanum (Wild potato).